The primary structure comprises 286 residues: Pantothenate synthetase (286 aa).

Residue 30–37 (MGNLHSGH) participates in ATP binding. H37 serves as the catalytic Proton donor. Position 61 (Q61) interacts with (R)-pantoate. Q61 contributes to the beta-alanine binding site. 149 to 152 (GQKD) serves as a coordination point for ATP. Residue Q155 participates in (R)-pantoate binding. ATP-binding positions include V178 and 186-189 (LSSR).

Belongs to the pantothenate synthetase family. Homodimer.

It localises to the cytoplasm. It catalyses the reaction (R)-pantoate + beta-alanine + ATP = (R)-pantothenate + AMP + diphosphate + H(+). The protein operates within cofactor biosynthesis; (R)-pantothenate biosynthesis; (R)-pantothenate from (R)-pantoate and beta-alanine: step 1/1. In terms of biological role, catalyzes the condensation of pantoate with beta-alanine in an ATP-dependent reaction via a pantoyl-adenylate intermediate. This is Pantothenate synthetase from Pseudomonas fluorescens (strain Pf0-1).